The sequence spans 1357 residues: DNA-directed RNA polymerase subunit beta (1357 aa).

Belongs to the RNA polymerase beta chain family. The RNAP catalytic core consists of 2 alpha, 1 beta, 1 beta' and 1 omega subunit. When a sigma factor is associated with the core the holoenzyme is formed, which can initiate transcription.

It carries out the reaction RNA(n) + a ribonucleoside 5'-triphosphate = RNA(n+1) + diphosphate. In terms of biological role, DNA-dependent RNA polymerase catalyzes the transcription of DNA into RNA using the four ribonucleoside triphosphates as substrates. This is DNA-directed RNA polymerase subunit beta from Pseudomonas aeruginosa (strain LESB58).